The chain runs to 179 residues: Cytochrome b6-f complex iron-sulfur subunit 1 (179 aa).

Residues 21-43 (LLTFGTVTGVALGALYPVVNYFI) traverse the membrane as a helical segment. A Rieske domain is found at 61–162 (GNDVSVSKFL…AKTENDKIVL (102 aa)). [2Fe-2S] cluster-binding residues include Cys-108, His-110, Cys-126, and His-129. Cysteines 113 and 128 form a disulfide.

This sequence belongs to the Rieske iron-sulfur protein family. In terms of assembly, the 4 large subunits of the cytochrome b6-f complex are cytochrome b6, subunit IV (17 kDa polypeptide, PetD), cytochrome f and the Rieske protein, while the 4 small subunits are PetG, PetL, PetM and PetN. The complex functions as a dimer. [2Fe-2S] cluster serves as cofactor.

Its subcellular location is the cellular thylakoid membrane. The enzyme catalyses 2 oxidized [plastocyanin] + a plastoquinol + 2 H(+)(in) = 2 reduced [plastocyanin] + a plastoquinone + 4 H(+)(out). In terms of biological role, component of the cytochrome b6-f complex, which mediates electron transfer between photosystem II (PSII) and photosystem I (PSI), cyclic electron flow around PSI, and state transitions. In Nostoc sp. (strain PCC 7120 / SAG 25.82 / UTEX 2576), this protein is Cytochrome b6-f complex iron-sulfur subunit 1.